The chain runs to 451 residues: UDP-N-acetylmuramate--L-alanine ligase (451 aa).

110–116 contacts ATP; sequence GTHGKTT.

The protein belongs to the MurCDEF family.

The protein localises to the cytoplasm. It carries out the reaction UDP-N-acetyl-alpha-D-muramate + L-alanine + ATP = UDP-N-acetyl-alpha-D-muramoyl-L-alanine + ADP + phosphate + H(+). The protein operates within cell wall biogenesis; peptidoglycan biosynthesis. In terms of biological role, cell wall formation. This is UDP-N-acetylmuramate--L-alanine ligase from Francisella tularensis subsp. tularensis (strain WY96-3418).